Consider the following 513-residue polypeptide: Light-independent protochlorophyllide reductase subunit B (513 aa).

[4Fe-4S] cluster is bound at residue Asp-36. Asp-274 functions as the Proton donor in the catalytic mechanism. Substrate is bound at residue 409–410 (GL). The disordered stretch occupies residues 426-457 (DAAGPSHHGGHSPKPQAAEPAPQAAPQPENTG). The span at 440 to 454 (PQAAEPAPQAAPQPE) shows a compositional bias: low complexity.

The protein belongs to the ChlB/BchB/BchZ family. In terms of assembly, protochlorophyllide reductase is composed of three subunits; BchL, BchN and BchB. Forms a heterotetramer of two BchB and two BchN subunits. Requires [4Fe-4S] cluster as cofactor.

The catalysed reaction is chlorophyllide a + oxidized 2[4Fe-4S]-[ferredoxin] + 2 ADP + 2 phosphate = protochlorophyllide a + reduced 2[4Fe-4S]-[ferredoxin] + 2 ATP + 2 H2O. It participates in porphyrin-containing compound metabolism; bacteriochlorophyll biosynthesis (light-independent). Functionally, component of the dark-operative protochlorophyllide reductase (DPOR) that uses Mg-ATP and reduced ferredoxin to reduce ring D of protochlorophyllide (Pchlide) to form chlorophyllide a (Chlide). This reaction is light-independent. The NB-protein (BchN-BchB) is the catalytic component of the complex. This chain is Light-independent protochlorophyllide reductase subunit B, found in Roseobacter denitrificans (strain ATCC 33942 / OCh 114) (Erythrobacter sp. (strain OCh 114)).